A 193-amino-acid polypeptide reads, in one-letter code: CASP-like protein 2U1 (193 aa).

The Cytoplasmic segment spans residues 1–18 (MAMALALGGGQDAERKVK). The helical transmembrane segment at 19–39 (VAEVALRALLCGLGALAAALV) threads the bilayer. Over 40 to 61 (ATDTQTRTFFSLQKKASYTDMK) the chain is Extracellular. Residues 62–82 (AMVFLVDAAAVAAGYSLLQLA) form a helical membrane-spanning segment. Over 83 to 113 (ARCCGGGAMSSGRGDGGGRGRALSWCVFSCD) the chain is Cytoplasmic. The helical transmembrane segment at 114–134 (QALAYVLLAAVAAALQASVVA) threads the bilayer. Over 135–156 (KRGQPELQWMGICALYGAFCRQ) the chain is Extracellular. Residues 157-177 (AGAGLATAVVAGLAAVLLAFL) traverse the membrane as a helical segment. Over 178-193 (SAFNLFRLYGSGGTKS) the chain is Cytoplasmic.

This sequence belongs to the Casparian strip membrane proteins (CASP) family. In terms of assembly, homodimer and heterodimers.

Its subcellular location is the cell membrane. The polypeptide is CASP-like protein 2U1 (Sorghum bicolor (Sorghum)).